The sequence spans 221 residues: uncharacterized protein (221 aa).

6 consecutive transmembrane segments (helical) span residues 33–55 (YFLL…ISYI), 70–92 (FGYR…QKIV), 99–121 (LEML…FIII), 125–147 (YGAY…YTLL), 154–176 (YFND…SFWI), and 186–208 (IISM…ITLI).

Its subcellular location is the cell membrane. This is an uncharacterized protein from Aquifex aeolicus (strain VF5).